Reading from the N-terminus, the 62-residue chain is Large ribosomal subunit protein uL29 (62 aa).

This sequence belongs to the universal ribosomal protein uL29 family.

This chain is Large ribosomal subunit protein uL29, found in Cytophaga hutchinsonii (strain ATCC 33406 / DSM 1761 / CIP 103989 / NBRC 15051 / NCIMB 9469 / D465).